Reading from the N-terminus, the 450-residue chain is Molybdate-anion transporter (450 aa).

12 consecutive transmembrane segments (helical) span residues 1–21 (MLVT…GLEL), 43–63 (LDFY…APYL), 79–99 (ILYV…SSLV), 128–148 (FVLL…FSAF), 176–196 (FWNH…ACWM), 198–218 (LGPV…GALA), 249–269 (VLLL…FVFL), 278–298 (GAPL…GSSL), 311–331 (PMHL…MLTF), 344–364 (FIAF…MSFL), 376–396 (GVLN…LLVL), and 409–429 (FSIC…LFTV).

The protein belongs to the major facilitator superfamily.

Its subcellular location is the cell membrane. In terms of biological role, mediates high-affinity intracellular uptake of the rare oligo-element molybdenum. This Bos taurus (Bovine) protein is Molybdate-anion transporter (MFSD5).